Reading from the N-terminus, the 174-residue chain is Peptide deformylase (174 aa).

Fe cation contacts are provided by cysteine 98 and histidine 140. Glutamate 141 is a catalytic residue. Position 144 (histidine 144) interacts with Fe cation.

The protein belongs to the polypeptide deformylase family. Fe(2+) serves as cofactor.

It catalyses the reaction N-terminal N-formyl-L-methionyl-[peptide] + H2O = N-terminal L-methionyl-[peptide] + formate. Removes the formyl group from the N-terminal Met of newly synthesized proteins. Requires at least a dipeptide for an efficient rate of reaction. N-terminal L-methionine is a prerequisite for activity but the enzyme has broad specificity at other positions. This is Peptide deformylase from Bradyrhizobium diazoefficiens (strain JCM 10833 / BCRC 13528 / IAM 13628 / NBRC 14792 / USDA 110).